A 1189-amino-acid polypeptide reads, in one-letter code: Pumilio homolog 1 (1189 aa).

An N-acetylserine modification is found at S2. At S19 the chain carries Phosphoserine. Positions 22-73 (LKHHPQEPANPNMPVVLTSGTGSQAQPQPAANQALAAGTHSSPVPGSIGVAG) are disordered. Over residues 45-58 (QAQPQPAANQALAA) the composition is skewed to low complexity. Phosphoserine occurs at positions 75, 98, and 106. T112 bears the Phosphothreonine mark. Residues S124, S159, S197, S209, and S229 each carry the phosphoserine modification. Residues 233–272 (SCLRKGGFGPRDADSDENDKGEKKNKGTFDGDKLGDLKEE) form a disordered region. The segment covering 250-272 (NDKGEKKNKGTFDGDKLGDLKEE) has biased composition (basic and acidic residues). S305 is subject to Phosphoserine. Positions 491–503 (QQSAPQAQQGQQQ) are enriched in low complexity. 2 disordered regions span residues 491–525 (QQSA…GQQT) and 614–647 (AGTT…SSFY). Over residues 512–525 (RPLTPNQNQQGQQT) the composition is skewed to polar residues. T515 is subject to Phosphothreonine. Positions 627–647 (QQPQPQPQQQPSNNLASSSFY) are enriched in low complexity. A phosphoserine mark is found at S710 and S715. The segment at 743-773 (GPVGMPLPSQGPGHSQTPPPSLSSHGSSSSL) is disordered. The segment covering 764–773 (LSSHGSSSSL) has biased composition (low complexity). The residue at position 797 (R797) is an Omega-N-methylarginine. A phosphoserine mark is found at S807 and S823. Positions 829–1171 (GRSRLLEDFR…HILAKLEKYY (343 aa)) constitute a PUM-HD domain. 8 Pumilio repeats span residues 849 to 884 (EIAG…LVFN), 885 to 920 (EILQ…ALAE), 921 to 958 (RIRG…EMVR), 959 to 994 (ELDG…FIID), 995 to 1030 (AFKG…PILE), 1031 to 1066 (ELHQ…KIVA), 1067 to 1102 (EIRG…VLID), and 1106 to 1145 (TMND…IVMH). Residues 864 to 868 (SRFIQ) form an adenine-nucleotide binding in RNA target region. Positions 900–904 (NYVIQ) are uracil-nucleotide binding in RNA target. The tract at residues 936–940 (CRVIQ) is adenine-nucleotide binding in RNA target. The segment at 974–978 (NHVVQ) is non-specific-nucleotide binding in RNA target. The adenine-nucleotide binding in RNA target stretch occupies residues 1010–1014 (CRVIQ). The segment at 1046–1050 (NYVIQ) is uracil-nucleotide binding in RNA target. Guanine-nucleotide binding in RNA target stretches follow at residues 1082–1086 (SNVVE) and 1083–1086 (NVVE). A uracil-nucleotide binding in RNA target region spans residues 1125–1129 (NYVVQ).

As to quaternary structure, recruits the CCR4-POP2-NOT deadenylase leading to translational inhibition and mRNA degradation. Interacts with TRIM71 (via NHL repeats) in an RNA-dependent manner. Post-translationally, phosphorylation at Ser-715 promotes RNA-binding activity. Following growth factor stimulation phosphorylated at Ser-715, promoting binding to the 3'-UTR of CDKN1B/p27 mRNA. Widely expressed. Expressed in brain, heart, kidney, liver, lung, skin, intestine, spleen, testis and thymus. Weakly or not expressed in muscles and stomach. Expressed at various stages of myeloid and lymphoid cell development. Highly expressed in testis. Expressed in all major brain regions (at protein level).

The protein localises to the cytoplasm. The protein resides in the P-body. Its subcellular location is the cytoplasmic granule. In terms of biological role, sequence-specific RNA-binding protein that acts as a post-transcriptional repressor by binding the 3'-UTR of mRNA targets. Binds to an RNA consensus sequence, the Pumilio Response Element (PRE), 5'-UGUANAUA-3', that is related to the Nanos Response Element (NRE). Mediates post-transcriptional repression of transcripts via different mechanisms: acts via direct recruitment of the CCR4-POP2-NOT deadenylase leading to translational inhibition and mRNA degradation. Also mediates deadenylation-independent repression by promoting accessibility of miRNAs. Following growth factor stimulation, phosphorylated and binds to the 3'-UTR of CDKN1B/p27 mRNA, inducing a local conformational change that exposes miRNA-binding sites, promoting association of miR-221 and miR-222, efficient suppression of CDKN1B/p27 expression, and rapid entry to the cell cycle. Acts as a post-transcriptional repressor of E2F3 mRNAs by binding to its 3'-UTR and facilitating miRNA regulation. Represses a program of genes necessary to maintain genomic stability such as key mitotic, DNA repair and DNA replication factors. Its ability to repress those target mRNAs is regulated by the lncRNA NORAD (non-coding RNA activated by DNA damage) which, due to its high abundance and multitude of PUMILIO binding sites, is able to sequester a significant fraction of PUM1 and PUM2 in the cytoplasm. Involved in neuronal functions by regulating ATXN1 mRNA levels: acts by binding to the 3'-UTR of ATXN1 transcripts, leading to their down-regulation independently of the miRNA machinery. In testis, acts as a post-transcriptional regulator of spermatogenesis by binding to the 3'-UTR of mRNAs coding for regulators of p53/TP53. Involved in embryonic stem cell renewal by facilitating the exit from the ground state: acts by targeting mRNAs coding for naive pluripotency transcription factors and accelerates their down-regulation at the onset of differentiation. Binds specifically to miRNA MIR199A precursor, with PUM2, regulates miRNA MIR199A expression at a postranscriptional level. The chain is Pumilio homolog 1 from Mus musculus (Mouse).